A 100-amino-acid chain; its full sequence is MQLTPHEQERLLIHVAADVAEKRRARGVKLNHPEVVALITAHILEGARDGRSVGELMSSGRKLIQRDEVMEGIPEMIHDVQVEATFPDGTKLVTVHEPII.

This sequence belongs to the urease gamma subunit family. In terms of assembly, heterotrimer of UreA (gamma), UreB (beta) and UreC (alpha) subunits. Three heterotrimers associate to form the active enzyme.

The protein resides in the cytoplasm. It catalyses the reaction urea + 2 H2O + H(+) = hydrogencarbonate + 2 NH4(+). It participates in nitrogen metabolism; urea degradation; CO(2) and NH(3) from urea (urease route): step 1/1. This chain is Urease subunit gamma, found in Streptomyces coelicolor (strain ATCC BAA-471 / A3(2) / M145).